The following is a 181-amino-acid chain: ATP-dependent protease subunit HslV (181 aa).

T6 is an active-site residue. The Na(+) site is built by A162, C165, and T168.

Belongs to the peptidase T1B family. HslV subfamily. A double ring-shaped homohexamer of HslV is capped on each side by a ring-shaped HslU homohexamer. The assembly of the HslU/HslV complex is dependent on binding of ATP.

It localises to the cytoplasm. It catalyses the reaction ATP-dependent cleavage of peptide bonds with broad specificity.. With respect to regulation, allosterically activated by HslU binding. In terms of biological role, protease subunit of a proteasome-like degradation complex believed to be a general protein degrading machinery. This Solidesulfovibrio magneticus (strain ATCC 700980 / DSM 13731 / RS-1) (Desulfovibrio magneticus) protein is ATP-dependent protease subunit HslV.